A 560-amino-acid polypeptide reads, in one-letter code: NAD-dependent malic enzyme (560 aa).

Tyr-100 serves as the catalytic Proton donor. An NAD(+)-binding site is contributed by Arg-153. Catalysis depends on Lys-171, which acts as the Proton acceptor. A divalent metal cation is bound by residues Glu-242, Asp-243, and Asp-266. Residues Asp-266 and Asn-413 each contribute to the NAD(+) site.

It belongs to the malic enzymes family. As to quaternary structure, homotetramer. It depends on Mg(2+) as a cofactor. Mn(2+) serves as cofactor.

It catalyses the reaction (S)-malate + NAD(+) = pyruvate + CO2 + NADH. It carries out the reaction oxaloacetate + H(+) = pyruvate + CO2. This is NAD-dependent malic enzyme from Psychrobacter cryohalolentis (strain ATCC BAA-1226 / DSM 17306 / VKM B-2378 / K5).